Reading from the N-terminus, the 201-residue chain is Holliday junction branch migration complex subunit RuvA (201 aa).

The segment at Met-1 to Arg-63 is domain I. The interval Thr-64–Leu-142 is domain II. The flexible linker stretch occupies residues Phe-143–His-153. The tract at residues His-153–Lys-201 is domain III.

This sequence belongs to the RuvA family. In terms of assembly, homotetramer. Forms an RuvA(8)-RuvB(12)-Holliday junction (HJ) complex. HJ DNA is sandwiched between 2 RuvA tetramers; dsDNA enters through RuvA and exits via RuvB. An RuvB hexamer assembles on each DNA strand where it exits the tetramer. Each RuvB hexamer is contacted by two RuvA subunits (via domain III) on 2 adjacent RuvB subunits; this complex drives branch migration. In the full resolvosome a probable DNA-RuvA(4)-RuvB(12)-RuvC(2) complex forms which resolves the HJ.

It is found in the cytoplasm. The RuvA-RuvB-RuvC complex processes Holliday junction (HJ) DNA during genetic recombination and DNA repair, while the RuvA-RuvB complex plays an important role in the rescue of blocked DNA replication forks via replication fork reversal (RFR). RuvA specifically binds to HJ cruciform DNA, conferring on it an open structure. The RuvB hexamer acts as an ATP-dependent pump, pulling dsDNA into and through the RuvAB complex. HJ branch migration allows RuvC to scan DNA until it finds its consensus sequence, where it cleaves and resolves the cruciform DNA. The protein is Holliday junction branch migration complex subunit RuvA of Geobacillus sp. (strain WCH70).